A 314-amino-acid chain; its full sequence is 3'-5' exoribonuclease YhaM (314 aa).

Residues His163–Lys279 form the HD domain.

It belongs to the YhaM family.

In terms of biological role, shows a 3'-5' exoribonuclease activity. The chain is 3'-5' exoribonuclease YhaM from Bacillus velezensis (strain DSM 23117 / BGSC 10A6 / LMG 26770 / FZB42) (Bacillus amyloliquefaciens subsp. plantarum).